The chain runs to 137 residues: Large ribosomal subunit protein uL16 (137 aa).

Belongs to the universal ribosomal protein uL16 family. As to quaternary structure, part of the 50S ribosomal subunit.

Its function is as follows. Binds 23S rRNA and is also seen to make contacts with the A and possibly P site tRNAs. The sequence is that of Large ribosomal subunit protein uL16 from Anaplasma phagocytophilum (strain HZ).